The chain runs to 260 residues: Putative enoyl-CoA hydratase/isomerase YngF (260 aa).

Belongs to the enoyl-CoA hydratase/isomerase family.

The chain is Putative enoyl-CoA hydratase/isomerase YngF (yngF) from Bacillus subtilis (strain 168).